The following is a 420-amino-acid chain: Probable protein phosphatase 2C 76 (420 aa).

The PPM-type phosphatase domain occupies 101–347 (SCGYCSFRGK…DNITCIVVKF (247 aa)). Positions 137, 138, 299, and 338 each coordinate Mn(2+). The interval 353–420 (ESPKIETNAM…PETKGEKAGE (68 aa)) is disordered. Basic and acidic residues predominate over residues 403–420 (PDPKPETEPETKGEKAGE).

This sequence belongs to the PP2C family. The cofactor is Mg(2+). Mn(2+) is required as a cofactor.

The enzyme catalyses O-phospho-L-seryl-[protein] + H2O = L-seryl-[protein] + phosphate. The catalysed reaction is O-phospho-L-threonyl-[protein] + H2O = L-threonyl-[protein] + phosphate. The sequence is that of Probable protein phosphatase 2C 76 from Arabidopsis thaliana (Mouse-ear cress).